The primary structure comprises 333 residues: MDERLLSGESGYEDADLEYSLRPQTLRQYIGQDKAKHNLEVFIEAAKMREETLDHVLLYGPPGLGKTTLANIIANEMGVNIRTTSGPAIERPGDLAAVLTALQPGDVLFIDEIHRLHRSIEEVLYPAMEDFCLDIVIGKGPSARSVRLDLPPFTLVGATTRAGALSAPLRDRFGVLSRLEYYTVDQLSAIVERTAEVFEVEIDSLAALEIARRARGTPRIANRLLRRVRDFAQVRSDGTIAMEITQMALELLQVDKLGLDHIDHKLLLGIIEKFRGGPVGLETVSATIGEESHTIEDVYEPYLLQIGFLQRTPRGRIVTPLAYEHFGMEMPKV.

The segment at M1–Y182 is large ATPase domain (RuvB-L). Residues L21, R22, G63, K66, T67, T68, E129–F131, R172, Y182, and R219 each bind ATP. T67 is a binding site for Mg(2+). The small ATPAse domain (RuvB-S) stretch occupies residues T183–Q253. The tract at residues K256 to V333 is head domain (RuvB-H). Residues R311 and R316 each coordinate DNA.

The protein belongs to the RuvB family. Homohexamer. Forms an RuvA(8)-RuvB(12)-Holliday junction (HJ) complex. HJ DNA is sandwiched between 2 RuvA tetramers; dsDNA enters through RuvA and exits via RuvB. An RuvB hexamer assembles on each DNA strand where it exits the tetramer. Each RuvB hexamer is contacted by two RuvA subunits (via domain III) on 2 adjacent RuvB subunits; this complex drives branch migration. In the full resolvosome a probable DNA-RuvA(4)-RuvB(12)-RuvC(2) complex forms which resolves the HJ.

Its subcellular location is the cytoplasm. It catalyses the reaction ATP + H2O = ADP + phosphate + H(+). The RuvA-RuvB-RuvC complex processes Holliday junction (HJ) DNA during genetic recombination and DNA repair, while the RuvA-RuvB complex plays an important role in the rescue of blocked DNA replication forks via replication fork reversal (RFR). RuvA specifically binds to HJ cruciform DNA, conferring on it an open structure. The RuvB hexamer acts as an ATP-dependent pump, pulling dsDNA into and through the RuvAB complex. RuvB forms 2 homohexamers on either side of HJ DNA bound by 1 or 2 RuvA tetramers; 4 subunits per hexamer contact DNA at a time. Coordinated motions by a converter formed by DNA-disengaged RuvB subunits stimulates ATP hydrolysis and nucleotide exchange. Immobilization of the converter enables RuvB to convert the ATP-contained energy into a lever motion, pulling 2 nucleotides of DNA out of the RuvA tetramer per ATP hydrolyzed, thus driving DNA branch migration. The RuvB motors rotate together with the DNA substrate, which together with the progressing nucleotide cycle form the mechanistic basis for DNA recombination by continuous HJ branch migration. Branch migration allows RuvC to scan DNA until it finds its consensus sequence, where it cleaves and resolves cruciform DNA. This is Holliday junction branch migration complex subunit RuvB from Bacillus mycoides (strain KBAB4) (Bacillus weihenstephanensis).